We begin with the raw amino-acid sequence, 2280 residues long: Protein Ycf2 (2280 aa).

Gly1631–Ser1638 provides a ligand contact to ATP.

Belongs to the Ycf2 family.

Its subcellular location is the plastid. The protein resides in the chloroplast stroma. Its function is as follows. Probable ATPase of unknown function. Its presence in a non-photosynthetic plant (Epifagus virginiana) and experiments in tobacco indicate that it has an essential function which is probably not related to photosynthesis. The sequence is that of Protein Ycf2 from Nicotiana tomentosiformis (Tobacco).